The chain runs to 80 residues: Translation initiation factor IF-1, chloroplastic (80 aa).

An S1-like domain is found at 1–74 (MKEQKWIHEG…TRGRIIYRLR (74 aa)).

It belongs to the IF-1 family. In terms of assembly, component of the 30S ribosomal translation pre-initiation complex which assembles on the 30S ribosome in the order IF-2 and IF-3, IF-1 and N-formylmethionyl-tRNA(fMet); mRNA recruitment can occur at any time during PIC assembly.

It is found in the plastid. Its subcellular location is the chloroplast. Functionally, one of the essential components for the initiation of protein synthesis. Stabilizes the binding of IF-2 and IF-3 on the 30S subunit to which N-formylmethionyl-tRNA(fMet) subsequently binds. Helps modulate mRNA selection, yielding the 30S pre-initiation complex (PIC). Upon addition of the 50S ribosomal subunit IF-1, IF-2 and IF-3 are released leaving the mature 70S translation initiation complex. The sequence is that of Translation initiation factor IF-1, chloroplastic from Illicium parviflorum (Yellow anise tree).